Reading from the N-terminus, the 120-residue chain is NAD(P)H-quinone oxidoreductase subunit 3 (120 aa).

3 helical membrane passes run 11–31 (LIFL…SYLI), 64–84 (MFAL…PWAV), and 89–109 (LGLL…VALV).

This sequence belongs to the complex I subunit 3 family. In terms of assembly, NDH-1 can be composed of about 15 different subunits; different subcomplexes with different compositions have been identified which probably have different functions.

The protein localises to the cell inner membrane. It catalyses the reaction a plastoquinone + NADH + (n+1) H(+)(in) = a plastoquinol + NAD(+) + n H(+)(out). It carries out the reaction a plastoquinone + NADPH + (n+1) H(+)(in) = a plastoquinol + NADP(+) + n H(+)(out). Its function is as follows. NDH-1 shuttles electrons from an unknown electron donor, via FMN and iron-sulfur (Fe-S) centers, to quinones in the respiratory and/or the photosynthetic chain. The immediate electron acceptor for the enzyme in this species is believed to be plastoquinone. Couples the redox reaction to proton translocation, and thus conserves the redox energy in a proton gradient. Cyanobacterial NDH-1 also plays a role in inorganic carbon-concentration. This chain is NAD(P)H-quinone oxidoreductase subunit 3, found in Gloeobacter violaceus (strain ATCC 29082 / PCC 7421).